Reading from the N-terminus, the 836-residue chain is Translation initiation factor IF-2 (836 aa).

The interval 1 to 234 (MSDTDGKKPL…SLAAMKRKQE (234 aa)) is disordered. The span at 18–27 (SGQVKQSFSH) shows a compositional bias: polar residues. A compositionally biased stretch (low complexity) spans 50-60 (SGSSTTTSSPS). Residues 88–156 (KLREVEDAKR…ATRRAEEAKR (69 aa)) are compositionally biased toward basic and acidic residues. Positions 167–176 (PAESRASAPP) are enriched in low complexity. Positions 185–206 (SRKEREREADRDRTTKKDDSRR) are enriched in basic and acidic residues. The tr-type G domain maps to 333–501 (PRPPIITIMG…NIALQAEILD (169 aa)). The G1 stretch occupies residues 342–349 (GHVDHGKT). 342–349 (GHVDHGKT) provides a ligand contact to GTP. A G2 region spans residues 367–371 (GITQH). A G3 region spans residues 389 to 392 (DTPG). Residues 389–393 (DTPGH) and 443–446 (NKID) each bind GTP. The tract at residues 443–446 (NKID) is G4. The segment at 479–481 (SAK) is G5.

This sequence belongs to the TRAFAC class translation factor GTPase superfamily. Classic translation factor GTPase family. IF-2 subfamily.

It localises to the cytoplasm. Functionally, one of the essential components for the initiation of protein synthesis. Protects formylmethionyl-tRNA from spontaneous hydrolysis and promotes its binding to the 30S ribosomal subunits. Also involved in the hydrolysis of GTP during the formation of the 70S ribosomal complex. This is Translation initiation factor IF-2 from Cereibacter sphaeroides (strain ATCC 17029 / ATH 2.4.9) (Rhodobacter sphaeroides).